A 106-amino-acid polypeptide reads, in one-letter code: UPF0145 protein (106 aa).

This sequence belongs to the UPF0145 family.

The polypeptide is UPF0145 protein (Listeria grayi (Listeria murrayi)).